The following is a 241-amino-acid chain: Major prion protein (241 aa).

A signal peptide spans 1-15 (MLVLFVATWSDLGLC). Positions 16 to 31 (KKRPKPGGWNTGGSRY) are interaction with ADGRG6. The tract at residues 16–223 (KKRPKPGGWN…ESQAYYQRGS (208 aa)) is interaction with GRB2, ERI3 and SYN1. Positions 18 to 101 (RPKPGGWNTG…WHKPNKPKTS (84 aa)) are disordered. 5 tandem repeats follow at residues 44 to 52 (PQGGGGWGQ), 53 to 60 (PHGGGWGQ), 61 to 68 (PHGGGWGQ), 69 to 76 (PHGGGWGQ), and 77 to 84 (PHGGGWGQ). Residues 44–84 (PQGGGGWGQPHGGGWGQPHGGGWGQPHGGGWGQPHGGGWGQ) are 5 X 8 AA tandem repeats of P-H-G-G-G-W-G-Q. A compositionally biased stretch (gly residues) spans 45–88 (QGGGGWGQPHGGGWGQPHGGGWGQPHGGGWGQPHGGGWGQGGGT). H54, G55, G56, H62, G63, G64, H70, G71, G72, H78, G79, and G80 together coordinate Cu(2+). Over residues 91-101 (QWHKPNKPKTS) the composition is skewed to basic residues. Cysteines 172 and 207 form a disulfide. 2 N-linked (GlcNAc...) asparagine glycosylation sites follow: N174 and N190. S223 is lipidated: GPI-anchor amidated serine. A propeptide spans 224-241 (SMVLFSSPPVILLISFLI) (removed in mature form).

This sequence belongs to the prion family. As to quaternary structure, monomer and homodimer. Has a tendency to aggregate into amyloid fibrils containing a cross-beta spine, formed by a steric zipper of superposed beta-strands. Soluble oligomers may represent an intermediate stage on the path to fibril formation. Copper binding may promote oligomerization. Interacts with GRB2, APP, ERI3/PRNPIP and SYN1. Mislocalized cytosolically exposed PrP interacts with MGRN1; this interaction alters MGRN1 subcellular location and causes lysosomal enlargement. Interacts with APP. Interacts with KIAA1191. Interacts with ADGRG6.

The protein localises to the cell membrane. Its subcellular location is the golgi apparatus. In terms of biological role, its primary physiological function is unclear. May play a role in neuronal development and synaptic plasticity. May be required for neuronal myelin sheath maintenance. May promote myelin homeostasis through acting as an agonist for ADGRG6 receptor. May play a role in iron uptake and iron homeostasis. Soluble oligomers are toxic to cultured neuroblastoma cells and induce apoptosis (in vitro). Association with GPC1 (via its heparan sulfate chains) targets PRNP to lipid rafts. Also provides Cu(2+) or Zn(2+) for the ascorbate-mediated GPC1 deaminase degradation of its heparan sulfate side chains. The sequence is that of Major prion protein (PRNP) from Mandrillus sphinx (Mandrill).